A 283-amino-acid polypeptide reads, in one-letter code: Glutamate racemase (283 aa).

Substrate-binding positions include Asp7–Ser8 and Tyr39–Gly40. The active-site Proton donor/acceptor is the Cys70. Asn71–Thr72 is a substrate binding site. Catalysis depends on Cys206, which acts as the Proton donor/acceptor. Position 207-208 (Thr207–His208) interacts with substrate.

Belongs to the aspartate/glutamate racemases family.

The enzyme catalyses L-glutamate = D-glutamate. Its pathway is cell wall biogenesis; peptidoglycan biosynthesis. In terms of biological role, provides the (R)-glutamate required for cell wall biosynthesis. This Caulobacter sp. (strain K31) protein is Glutamate racemase.